The primary structure comprises 47 residues: Type II secretion system protein N (47 aa).

It belongs to the GSP N family.

The protein resides in the cell inner membrane. Functionally, involved in a type II secretion system (T2SS, formerly general secretion pathway, GSP) for the export of proteins. This chain is Type II secretion system protein N (exeN), found in Aeromonas salmonicida.